The primary structure comprises 927 residues: Roc-COR-CHAT protease (927 aa).

4 LRR repeats span residues 38–61 (AGQV…TEAQ), 83–107 (LPHL…GFRS), 109–125 (QQVY…VFEG), and 127–151 (CPAL…GFRA). Residues 152-170 (LKYIYATNNVLQKITFNRS) are LRR 5. LRR repeat units follow at residues 171-194 (MRLL…LSEI) and 195-217 (ETME…IWDR). A COR domain is found at 436–623 (EWLGVKEDLN…ELRWKKGVVL (188 aa)). Catalysis depends on residues H796 and C840.

A dedicated protease for gasdermin bGSDM; cleaves the bGSDM precursor, releasing the pore-forming moiety, which integrates into the membrane and triggers cell death. Probably involved in defense against bacteriophages. Expression of bGSDM and this neighboring protease is highly toxic in E.coli. Cells expressing the gene pair stop dividing and lose membrane integrity. Both proteins are required to kill E.coli. The bGSDM recognition site is larger than the 8 residues surrounding the cleavage site; replacement of the endogenous recognition site by the Runella site (NRVLGENM) in a number of other bGSDMs is not sufficient for them to be cleaved. This is Roc-COR-CHAT protease from Runella zeae (strain ATCC BAA-293 / DSM 19591 / LMG 21438 / NS12).